Reading from the N-terminus, the 913-residue chain is Alanine--tRNA ligase (913 aa).

Histidine 600, histidine 604, cysteine 703, and histidine 707 together coordinate Zn(2+).

Belongs to the class-II aminoacyl-tRNA synthetase family. Zn(2+) is required as a cofactor.

It is found in the cytoplasm. The enzyme catalyses tRNA(Ala) + L-alanine + ATP = L-alanyl-tRNA(Ala) + AMP + diphosphate. Its function is as follows. Catalyzes the attachment of alanine to tRNA(Ala) in a two-step reaction: alanine is first activated by ATP to form Ala-AMP and then transferred to the acceptor end of tRNA(Ala). Also edits incorrectly charged Ser-tRNA(Ala) and Gly-tRNA(Ala) via its editing domain. This is Alanine--tRNA ligase from Methanothrix thermoacetophila (strain DSM 6194 / JCM 14653 / NBRC 101360 / PT) (Methanosaeta thermophila).